A 520-amino-acid polypeptide reads, in one-letter code: MTEISILNDVQKIIVLDYGSQYNQLIARRIREFGVFSELKSHKITAQELHEINPIGIVLSGGPNSVYADNAFGIDPEIFELGIPILGICYGMQLITHKLGGKVVPAGQAGNREYGQSTLHLRETSKLFSGTPQEQLVLMSHGDAVTEIPEGFHLVGDSNDCPYAAIENTEKNLYGIQFHPEVRHSVYGNDILKNFAISICGARGDWSMDNFIDMEITKIRETVGDRKVLLGLSGGVDSSVVGVLLQKAIGDQLTCIFVDHGLLRKDEGDQVMGMLGGKFGLNIIRVDASKRFLDLLADVEDPEKKRKIIGNEFVYVFDDEASKLKGVDFLAQGTLYTDIIESGTETAQTIKSHHNVGGLPEDMQFELIEPLNTLFKDEVRALGIALGMPEEIVWRQPFPGPGLAIRVMGAITEEKLETVRESDAILREEIAKAGLDRDVWQYFTVNTGVRSVGVMGDGRTYDYTIAIRAITSIDGMTADFAQLPWDVLKKISTRIVNEVDHVNRIVYDITSKPPATVEWE.

One can recognise a Glutamine amidotransferase type-1 domain in the interval 12–205; sequence KIIVLDYGSQ…AISICGARGD (194 aa). C89 (nucleophile) is an active-site residue. Residues H179 and E181 contribute to the active site. The 190-residue stretch at 206–395 folds into the GMPS ATP-PPase domain; the sequence is WSMDNFIDME…LGMPEEIVWR (190 aa). 233-239 is a binding site for ATP; it reads SGGVDSS.

In terms of assembly, homodimer.

The enzyme catalyses XMP + L-glutamine + ATP + H2O = GMP + L-glutamate + AMP + diphosphate + 2 H(+). It participates in purine metabolism; GMP biosynthesis; GMP from XMP (L-Gln route): step 1/1. Functionally, catalyzes the synthesis of GMP from XMP. The sequence is that of GMP synthase [glutamine-hydrolyzing] from Streptococcus pyogenes serotype M3 (strain SSI-1).